Consider the following 786-residue polypeptide: MNEKILKTLEYDKIQQALLGQVVTANGRQLVQAMQPLTDPVAVQQALDETADGASALRLKGGIPVPQLENIDPALKRVDIGAVLNGQELASISRVLQTVSAIDKFLTDLQDQIDFRQLYTLQESLTVLPQLSRRLKTAVDPDGTLTDEASPQLHGVREQIKSIEGKIRGKMTNYTRGAQSKYLSDPIVTIRDDRYVIPVKAEYRAKFGGVVHDQSATGQTLFIEPQVIVALNNRLREAQLAEVAEINRILAELSNELAPYTGQIKANAAVLGHFDFINAKARLAKAEKATEPLVSADNDVLLRDARHPLIDPHKVVGNDIPLGDKYQAMVITGPNTGGKTITLKTLGLLQLMGQSGLFIPADDESRIGIFDEVFADIGDEQSIEQNLSTFSAHMDNIVHILKQLSQNSLVLFDELGAGTDPQEGAALAIAILDAVGEVGAYVVATTHYPELKLYGYNTAKTINASMEFDSKTLQPTYRLLVGVPGRSNAFDISARLGLPSVIVERAKSMISSDSHELNNMISDLEKQRKAAETAYEAARRQLADAQSVHDELAAAYKKFTTERDAQLQQAKDKANSLVDKAQTKADKIIKQLRQMQLTNPGTVKENQLIAAKTALKQLHQDEPLQKNRILRREREKQALHVGDEVKVASYDQTGTLLEQFDKKHWQVQLGILKMKVPTDEMEKIKPSKQSAAQRPVVKVSGGGMSGPSTTLDLRGERYDQAMADLDQYIDAALLAGYPSVTIIHGLGTGAIRNGVTQYLKRNRQVKTYGFAPQNAGGSGATIVNFK.

Position 333–340 (333–340 (GPNTGGKT)) interacts with ATP. Residues 682–709 (EKIKPSKQSAAQRPVVKVSGGGMSGPST) are disordered. The Smr domain occupies 711 to 786 (LDLRGERYDQ…GSGATIVNFK (76 aa)).

Belongs to the DNA mismatch repair MutS family. MutS2 subfamily. In terms of assembly, homodimer. Binds to stalled ribosomes, contacting rRNA.

Functionally, endonuclease that is involved in the suppression of homologous recombination and thus may have a key role in the control of bacterial genetic diversity. Its function is as follows. Acts as a ribosome collision sensor, splitting the ribosome into its 2 subunits. Detects stalled/collided 70S ribosomes which it binds and splits by an ATP-hydrolysis driven conformational change. Acts upstream of the ribosome quality control system (RQC), a ribosome-associated complex that mediates the extraction of incompletely synthesized nascent chains from stalled ribosomes and their subsequent degradation. Probably generates substrates for RQC. The chain is Endonuclease MutS2 from Lacticaseibacillus casei (strain BL23) (Lactobacillus casei).